The sequence spans 270 residues: Hydroxyethylthiazole kinase (270 aa).

M44 serves as a coordination point for substrate. Positions 119 and 165 each coordinate ATP. Position 192 (G192) interacts with substrate.

The protein belongs to the Thz kinase family. Requires Mg(2+) as cofactor.

It catalyses the reaction 5-(2-hydroxyethyl)-4-methylthiazole + ATP = 4-methyl-5-(2-phosphooxyethyl)-thiazole + ADP + H(+). It participates in cofactor biosynthesis; thiamine diphosphate biosynthesis; 4-methyl-5-(2-phosphoethyl)-thiazole from 5-(2-hydroxyethyl)-4-methylthiazole: step 1/1. Its function is as follows. Catalyzes the phosphorylation of the hydroxyl group of 4-methyl-5-beta-hydroxyethylthiazole (THZ). This is Hydroxyethylthiazole kinase from Corynebacterium efficiens (strain DSM 44549 / YS-314 / AJ 12310 / JCM 11189 / NBRC 100395).